The following is a 174-amino-acid chain: Shikimate kinase 2 (174 aa).

G12–T17 contributes to the ATP binding site. Mg(2+)-binding residues include T16 and D32. D34, R58, and G79 together coordinate substrate. The segment at A112–K126 is LID domain. Position 120 (R120) interacts with ATP. Substrate is bound at residue R139. Q155 is a binding site for ATP.

It belongs to the shikimate kinase family. AroL subfamily. As to quaternary structure, monomer. It depends on Mg(2+) as a cofactor.

Its subcellular location is the cytoplasm. The enzyme catalyses shikimate + ATP = 3-phosphoshikimate + ADP + H(+). The protein operates within metabolic intermediate biosynthesis; chorismate biosynthesis; chorismate from D-erythrose 4-phosphate and phosphoenolpyruvate: step 5/7. Catalyzes the specific phosphorylation of the 3-hydroxyl group of shikimic acid using ATP as a cosubstrate. In Yersinia pestis bv. Antiqua (strain Antiqua), this protein is Shikimate kinase 2.